We begin with the raw amino-acid sequence, 64 residues long: Disintegrin VLO5A (64 aa).

The Disintegrin domain maps to 1-64 (NSGNPCCDPV…SDCPRNPYKD (64 aa)). Cystine bridges form between Cys-6–Cys-29, Cys-20–Cys-26, Cys-25–Cys-50, and Cys-38–Cys-57. The Cell attachment site; atypical (VGD) signature appears at 42–44 (VGD).

This sequence belongs to the venom metalloproteinase (M12B) family. P-II subfamily. P-IIe sub-subfamily. In terms of assembly, heterodimer with VLO5B; disulfide-linked. As to expression, expressed by the venom gland.

Its subcellular location is the secreted. Poor inhibitor of platelet aggregation. The disintegrin inhibits the adhesion of the alpha-4/beta-1 (ITGA4/ITGB1) integrin to VCAM-1. Inhibition on alpha-IIb/beta-3 (ITGA2B/ITGB3) is low. The protein is Disintegrin VLO5A of Macrovipera lebetina obtusa (Levant blunt-nosed viper).